A 524-amino-acid polypeptide reads, in one-letter code: Inorganic phosphate transporter 1-1 (524 aa).

Residues 1–24 (MAEQQLGVLKALDVAKTQLYHFTA) lie on the Cytoplasmic side of the membrane. The helical transmembrane segment at 25–45 (IVIAGMGFFTDAYDLFCVSLV) threads the bilayer. The Extracellular portion of the chain corresponds to 46–70 (TKLLGRIYYFNPESAKPGSLPPHVA). The chain crosses the membrane as a helical span at residues 71–91 (AAVNGVALCGTLSGQLFFGWL). The Cytoplasmic portion of the chain corresponds to 92-99 (GDKLGRKK). Residues 100–120 (VYGLTLVMMILCSVASGLSFG) form a helical membrane-spanning segment. At 121-131 (HEAKGVMTTLC) the chain is on the extracellular side. A helical membrane pass occupies residues 132-152 (FFRFWLGFGIGGDYPLSATIM). At 153 to 161 (SEYANKKTR) the chain is on the cytoplasmic side. Residues 162-182 (GAFIAAVFAMQGVGILAGGFV) form a helical membrane-spanning segment. Residues 183-211 (ALAVSSIFDKKFPAPTYAVNRALSTPPQV) lie on the Extracellular side of the membrane. Residues 212 to 232 (DYIWRIIVMFGALPAALTYYW) traverse the membrane as a helical segment. Residues 233 to 292 (RMKMPETARYTALVAKNIKQATADMSKVLQTDIELEERVEDDVKDPKQNYGLFSKEFLRR) are Cytoplasmic-facing. A helical transmembrane segment spans residues 293–313 (HGLHLLGTTSTWFLLDIAFYS). The Extracellular segment spans residues 314–348 (QNLFQKDIFSAIGWIPKAATMNATHEVFRIARAQT). Residues 349–369 (LIALCSTVPGYWFTVAFIDTI) form a helical membrane-spanning segment. Residues 370–371 (GR) lie on the Cytoplasmic side of the membrane. Residues 372–392 (FKIQLNGFFMMTVFMFAIAFP) form a helical membrane-spanning segment. Over 393–402 (YNHWIKPENR) the chain is Extracellular. A helical membrane pass occupies residues 403-423 (IGFVVMYSLTFFFANFGPNAT). Residues 424–441 (TFIVPAEIFPARLRSTCH) are Cytoplasmic-facing. Residues 442–462 (GISAAAGKAGAIVGAFGFLYA) form a helical membrane-spanning segment. Over 463-484 (AQSQDKAKVDAGYPPGIGVKNS) the chain is Extracellular. Residues 485–505 (LIMLGVLNFIGMLFTFLVPEP) traverse the membrane as a helical segment. Residues 506-524 (KGKSLEELSGEAEVSHDEK) lie on the Cytoplasmic side of the membrane.

It belongs to the major facilitator superfamily. Phosphate:H(+) symporter (TC 2.A.1.9) family. In terms of assembly, interacts with NLA. Ubiquitinated by NLA. Ubiquitination of PHT1-1 leads to its degradation by the proteasome. Mostly expressed in roots, especially in trichoblasts and in emerging secondary roots and root hairs, but not in root tips. Also present in hydathodes, axillary buds and peripheral endosperm of germinating seeds.

Its subcellular location is the cell membrane. Its activity is regulated as follows. Inhibited by protonophores (e.g. 2,4-dinitrophenol and carbonylcyanide m-chlorophenylhydrazone), the plasma membrane H(+)-ATPase inhibitor diethylstilbestorol, and the phosphate analog arsenate. Functionally, high-affinity transporter for external inorganic phosphate. Acts as a H(+):phosphate symporter in both low- and high-Pi conditions. Confers sensitivity to arsenate. The chain is Inorganic phosphate transporter 1-1 (PHT1-1) from Arabidopsis thaliana (Mouse-ear cress).